The chain runs to 225 residues: Cell division protein SepF (225 aa).

The tract at residues 22–116 (EYLDEPEPAR…TRGALAVDTR (95 aa)) is disordered. 2 stretches are compositionally biased toward basic and acidic residues: residues 28-54 (EPAR…RDFA) and 77-86 (RYDGPRHSSR).

This sequence belongs to the SepF family. As to quaternary structure, homodimer. Interacts with FtsZ.

The protein resides in the cytoplasm. Its function is as follows. Cell division protein that is part of the divisome complex and is recruited early to the Z-ring. Probably stimulates Z-ring formation, perhaps through the cross-linking of FtsZ protofilaments. Its function overlaps with FtsA. The chain is Cell division protein SepF from Rhodococcus jostii (strain RHA1).